The chain runs to 293 residues: MKRIFLFLITNLAVMVVLSATMRILGVDRFLTAQGLNLTGLLIFSAVIGFTGAIISLLMSKPMAKWSTGARVIDPNAPANQREAWLLDTVHQLADRAGIGRPEVAIYQGEPNAFATGAFRNDSLVAVSTGLLDSMTEEEVAAVLGHEVAHVANGDMVTLTLIQGVVNTFVVFLARVVGYFVDRAILKNERGVGLGYYATVIVCEIVFGILASIIVAWFSRQREYRADAGSAHLMGSREPMIRALARLGGLEPGELPKSFEASGISGKNGISAMFASHPPIQARIAALQHARLG.

2 helical membrane passes run 4 to 24 (IFLFLITNLAVMVVLSATMRI) and 38 to 58 (LTGLLIFSAVIGFTGAIISLL). His-146 contributes to the Zn(2+) binding site. The active site involves Glu-147. His-150 provides a ligand contact to Zn(2+). A run of 2 helical transmembrane segments spans residues 161-181 (LIQGVVNTFVVFLARVVGYFV) and 198-218 (ATVIVCEIVFGILASIIVAWF). Glu-223 is a binding site for Zn(2+).

It belongs to the peptidase M48B family. The cofactor is Zn(2+).

The protein localises to the cell inner membrane. This chain is Protease HtpX homolog, found in Bordetella parapertussis (strain 12822 / ATCC BAA-587 / NCTC 13253).